A 1199-amino-acid polypeptide reads, in one-letter code: MSPAAAAADGGERRRPPLGVREGRGRTRGCGGPAGAAALGLALLGLALYLVPAAAALAWLAVGASAAWWGLSREPRGPRGLSSFVRESRRHPRPALTASPLPAKSPVNGSLCEPRSPLGGPDPAELLLMGSYLGKPGPPEPALPQDPRDRPGRRPPSRSPPSSSTAQRVHHVYPALPTPLLRPSRRPPHRDCGPLSSRFVITPRRRYPIQQAQYSLLGALPTVCWNGGHKKAVLSARNSRMVCSPVTVRIAPPDSKLFRSPMPEQILSTTLSSPSSNAPDPCAKETVLNALKEKKKRTVAEEDQLHLDGQENKRRRHDSSGSGHSAFEPLVANGVPAAFVPKPGSLKRSLASQSSDDHLNKRSRTSSVSSLTSTCTGGIPSSSRNAITSSYSSTRGVSQLWKRSGPTSSPFSSPASSRSQTPERPAKKTREEEPCHQSSSSAPLVTDKESPGEKVTDPATGKQQSLWTSPPTPGSSGQRKRKIQLLPSRRGDQLTLPPPPELGYSITAEDLDMERRASLQWFNKVLEDKTDDASTPATDTSPATSPPFTLTLPTVGPAASPASLPAPSSNPLLESLKKMQESPAPSSSEPPEAATVAAPSPPKTPSLLAPLVSPLTGPLASTSSDSKPTTTFLGLASASSATPLTDTKAPGVSQAQLCVSTPAATAPSPTPASTLFGMLSPPASSSSLATPGPACASPMFKPIFPATPKSESDNPLPTSSSAATTTPASTALPTTATATAHTFKPIFESVEPFAAMPLSPPFSLKQTTAPATTAATSAPLLTGLGTATSTVATGTTASASKPVFGFGVTTAASTASTIASTSQSILFGGAPPVTASSSAPALASIFQFGKPLAPAASVAGTSFSQSLASSAQTAASNSSGGFSGFGGTLTTSTSAPATTSQPTLTFSNTVTPTFNIPFSASAKPALPTYPGANSQPTFGATDGATKPALAPSFGSSFTFGNSVASAPSAAPAPAAFGGAAQPAFGGLKASASTFGTPASTQPAFGSTTSVFSFGSATTSGFGAAAATTQTTHSGSSSSLFGSSTPSPFTFGGSAAPAGGGGFGLSATPGTGSTSGTFSFGSGQSGTTGTTTSFGGSLSQNTLGAPSQSSPFAFSVGSTPESKPVFGGTSTPTFGQSAPAPGVGTTGSSLSFGAPSTPAQGFVGVGPFGSGAPSFSIGAGSKTPGARQRLQARRQHTRKK.

Residues 1–29 (MSPAAAAADGGERRRPPLGVREGRGRTRG) form a disordered region. The tract at residues 1 to 56 (MSPAAAAADGGERRRPPLGVREGRGRTRGCGGPAGAAALGLALLGLALYLVPAAAA) is cisternal side. The span at 10 to 25 (GGERRRPPLGVREGRG) shows a compositional bias: basic and acidic residues. The helical transmembrane segment at 57 to 77 (LAWLAVGASAAWWGLSREPRG) threads the bilayer. Positions 76-1199 (RGPRGLSSFV…QARRQHTRKK (1124 aa)) are pore side. Residues 82–197 (SSFVRESRRH…PHRDCGPLSS (116 aa)) form a disordered region. Serine 83 and serine 244 each carry phosphoserine. Disordered stretches follow at residues 294-328 (KKKR…SAFE), 344-509 (GSLK…ITAE), 528-631 (DKTD…PTTT), 701-734 (KPIF…ALPT), 1061-1151 (GFGL…SLSF), and 1163-1199 (GVGP…TRKK). Positions 298 to 312 (TVAEEDQLHLDGQEN) are enriched in basic and acidic residues. Phosphoserine is present on residues serine 319, serine 322, serine 325, serine 345, serine 355, serine 367, and serine 370. Residues 365 to 376 (TSSVSSLTSTCT) show a composition bias toward low complexity. Polar residues predominate over residues 379 to 397 (IPSSSRNAITSSYSSTRGV). Residues 404-419 (SGPTSSPFSSPASSRS) show a composition bias toward low complexity. Serine 408, serine 409, serine 412, serine 413, serine 416, and serine 417 each carry phosphoserine. Composition is skewed to basic and acidic residues over residues 424–435 (RPAKKTREEEPC) and 446–456 (TDKESPGEKVT). The segment covering 461 to 477 (GKQQSLWTSPPTPGSSG) has biased composition (polar residues). Low complexity-rich tracts occupy residues 533 to 547 (ASTP…TSPP), 557 to 574 (PAAS…PLLE), and 581 to 598 (ESPA…TVAA). The span at 619–631 (LASTSSDSKPTTT) shows a compositional bias: polar residues. 2 stretches are compositionally biased toward low complexity: residues 715 to 734 (PLPT…ALPT) and 1064 to 1098 (LSAT…GSLS). Positions 1099–1120 (QNTLGAPSQSSPFAFSVGSTPE) are enriched in polar residues. Residues 1189–1199 (LQARRQHTRKK) show a composition bias toward basic residues.

It belongs to the POM121 family. In terms of processing, proteolytically cleaved by caspase-3 during apoptosis.

It localises to the nucleus. It is found in the nuclear pore complex. The protein localises to the nucleus membrane. Its subcellular location is the endoplasmic reticulum membrane. In terms of biological role, essential component of the nuclear pore complex (NPC). The repeat-containing domain may be involved in anchoring components of the pore complex to the pore membrane. When overexpressed in cells induces the formation of cytoplasmic annulate lamellae (AL). This chain is Nuclear envelope pore membrane protein POM 121 (Pom121), found in Rattus norvegicus (Rat).